We begin with the raw amino-acid sequence, 255 residues long: MKVKVFNLEGEPVEEIELPNVFATPFRPDLIRRAVIASWTHRIQPQGRDPLAGKRRVTENIGKGHGMARVERIKTSPRFAAFVPFARGGRRTHPPKVEKIIWEDINKKERRLAIMSAIAATANYDLVRARGHIVDNVPQVPLVVVNDLEKVFKTAQTREIFKKLGVWDDIERAKKNTKIRAGKGKMRGRRYKKAKGPLIVVAKNEGIVQGARNHPGVDVVTVENLGVELLAPGTHPGRLTIWTKGAIERLREIYG.

The protein belongs to the universal ribosomal protein uL4 family. In terms of assembly, part of the 50S ribosomal subunit.

In terms of biological role, one of the primary rRNA binding proteins, this protein initially binds near the 5'-end of the 23S rRNA. It is important during the early stages of 50S assembly. It makes multiple contacts with different domains of the 23S rRNA in the assembled 50S subunit and ribosome. Its function is as follows. Forms part of the polypeptide exit tunnel. The polypeptide is Large ribosomal subunit protein uL4 (Thermococcus onnurineus (strain NA1)).